Here is a 688-residue protein sequence, read N- to C-terminus: Polyribonucleotide nucleotidyltransferase (688 aa).

The Mg(2+) site is built by aspartate 484 and aspartate 490. Residues proline 550–isoleucine 609 form the KH domain. The S1 motif domain maps to aspartate 626–alanine 688.

Belongs to the polyribonucleotide nucleotidyltransferase family. Mg(2+) serves as cofactor.

The protein localises to the cytoplasm. The enzyme catalyses RNA(n+1) + phosphate = RNA(n) + a ribonucleoside 5'-diphosphate. Involved in mRNA degradation. Catalyzes the phosphorolysis of single-stranded polyribonucleotides processively in the 3'- to 5'-direction. This is Polyribonucleotide nucleotidyltransferase from Helicobacter pylori (strain Shi470).